The following is a 364-amino-acid chain: N-alpha-acetyltransferase 30 (364 aa).

Positions 1-18 (MAEVPPGPSSLLPPPAPA) are enriched in pro residues. Disordered regions lie at residues 1–21 (MAEV…AAPA), 39–65 (SEDE…TSAK), and 110–164 (EAAA…SDPA). Ser39 and Ser54 each carry phosphoserine. The span at 39 to 48 (SEDEEDDEEH) shows a compositional bias: acidic residues. Over residues 126-135 (AEGHPGERPP) the composition is skewed to basic and acidic residues. Low complexity predominate over residues 152–164 (AAAAAAGAASDPA). Phosphoserine occurs at positions 192, 198, and 201. Positions 216-364 (RYVRYESELQ…DALRLKLWLR (149 aa)) constitute an N-acetyltransferase domain. Lys235 carries the post-translational modification N6-acetyllysine.

Belongs to the acetyltransferase family. MAK3 subfamily. As to quaternary structure, component of the N-terminal acetyltransferase C (NatC) complex, which is composed of NAA35, NAA38 and NAA30.

The protein localises to the cytoplasm. It localises to the nucleus. The enzyme catalyses N-terminal L-methionyl-L-leucyl-[protein] + acetyl-CoA = N-terminal N(alpha)-acetyl-L-methionyl-L-leucyl-[protein] + CoA + H(+). It catalyses the reaction N-terminal L-methionyl-L-isoleucyl-[protein] + acetyl-CoA = N-terminal N(alpha)-acetyl-L-methionyl-L-isoleucyl-[protein] + CoA + H(+). It carries out the reaction N-terminal L-methionyl-L-phenylalanyl-[protein] + acetyl-CoA = N-terminal N(alpha)-acetyl-L-methionyl-L-phenylalanyl-[protein] + CoA + H(+). The catalysed reaction is N-terminal L-methionyl-L-tryptophyl-[protein] + acetyl-CoA = N-terminal N(alpha)-acetyl-L-methionyl-L-tryptophyl-[protein] + CoA + H(+). The enzyme catalyses N-terminal L-methionyl-L-tyrosyl-[protein] + acetyl-CoA = N-terminal N(alpha)-acetyl-L-methionyl-L-tyrosyl-[protein] + CoA + H(+). In terms of biological role, catalytic subunit of the N-terminal acetyltransferase C (NatC) complex. Catalyzes acetylation of the N-terminal methionine residues of peptides beginning with Met-Leu-Ala and Met-Leu-Gly. N-terminal acetylation protects proteins from ubiquitination and degradation by the N-end rule pathway. Necessary for the lysosomal localization and function of ARL8B sugeesting that ARL8B is a NatC substrate. The sequence is that of N-alpha-acetyltransferase 30 (Naa30) from Mus musculus (Mouse).